The primary structure comprises 719 residues: Glutamate--tRNA ligase, cytoplasmic (719 aa).

Ser93 lines the ATP pocket. The interval 176–205 (SGKPVAAPKSKDSQQAVKGDGQDKGKPEVD) is disordered. Positions 195–204 (DGQDKGKPEV) are enriched in basic and acidic residues. An L-glutamate-binding site is contributed by 217 to 219 (RFA). A 'HIGH' region motif is present at residues 220 to 230 (PEPSGYLHIGH). An ATP-binding site is contributed by His227. Residues 393–397 (YDFAC) and Arg411 contribute to the L-glutamate site. ATP-binding positions include Glu414 and 448–452 (LLSKR). Residues 448–452 (LLSKR) carry the 'KMSKS' region motif.

This sequence belongs to the class-I aminoacyl-tRNA synthetase family. Glutamate--tRNA ligase type 2 subfamily. Interacts with GLN2, COL4 and RPP13L4/ZAR1.

It is found in the cytoplasm. Its subcellular location is the cytosol. It catalyses the reaction tRNA(Glu) + L-glutamate + ATP = L-glutamyl-tRNA(Glu) + AMP + diphosphate. Functionally, catalyzes the attachment of glutamate to tRNA(Glu) in a two-step reaction: glutamate is first activated by ATP to form Glu-AMP and then transferred to the acceptor end of tRNA(Glu). This chain is Glutamate--tRNA ligase, cytoplasmic, found in Arabidopsis thaliana (Mouse-ear cress).